A 201-amino-acid chain; its full sequence is ATP-dependent Clp protease proteolytic subunit (201 aa).

Catalysis depends on serine 98, which acts as the Nucleophile. The active site involves histidine 123.

It belongs to the peptidase S14 family. In terms of assembly, fourteen ClpP subunits assemble into 2 heptameric rings which stack back to back to give a disk-like structure with a central cavity, resembling the structure of eukaryotic proteasomes.

The protein localises to the cytoplasm. The enzyme catalyses Hydrolysis of proteins to small peptides in the presence of ATP and magnesium. alpha-casein is the usual test substrate. In the absence of ATP, only oligopeptides shorter than five residues are hydrolyzed (such as succinyl-Leu-Tyr-|-NHMec, and Leu-Tyr-Leu-|-Tyr-Trp, in which cleavage of the -Tyr-|-Leu- and -Tyr-|-Trp bonds also occurs).. Functionally, cleaves peptides in various proteins in a process that requires ATP hydrolysis. Has a chymotrypsin-like activity. Plays a major role in the degradation of misfolded proteins. The polypeptide is ATP-dependent Clp protease proteolytic subunit (Desulfatibacillum aliphaticivorans).